A 307-amino-acid polypeptide reads, in one-letter code: Cyclin-dependent kinase 5 activator 1 (307 aa).

Glycine 2 is lipidated: N-myristoyl glycine. Phosphoserine; by CDK5 is present on serine 8. Residues 97–133 (TFAQPPPAQPPAPPASQLSGSQTGVSSSVKKAPHPAI) are disordered. Pro residues predominate over residues 100–110 (QPPPAQPPAPP). The segment covering 112 to 125 (SQLSGSQTGVSSSV) has biased composition (polar residues). At threonine 138 the chain carries Phosphothreonine; by CDK5.

Belongs to the cyclin-dependent kinase 5 activator family. In terms of assembly, heterodimer composed of a catalytic subunit CDK5 and a regulatory subunit CDK5R1 (p25) and macromolecular complex composed of at least CDK5, CDK5R1 (p35) and CDK5RAP1 or CDK5RAP2 or CDK5RAP3. Only the heterodimer shows kinase activity. Interacts with EPHA4 and NGEF; may mediate the activation of NGEF by EPHA4. Interacts with RASGRF2. The complex p35/CDK5 interacts with CLOCK. Post-translationally, the p35 form is proteolytically cleaved by calpain, giving rise to the p25 form. P35 has a 5 to 10 fold shorter half-life compared to p25. The conversion results in deregulation of the CDK5 kinase: p25/CDK5 kinase displays an increased and altered tau phosphorylation in comparison to the p35/CDK5 kinase in vivo. Myristoylated. A proper myristoylation signal is essential for the proper distribution of p35. In terms of processing, phosphorylation at Ser-8 and Thr-138 by CDK5 prevents calpain-mediated proteolysis. Post-translationally, ubiquitinated, leading to its degradation: degradation of p35 by proteasome results in down-regulation of CDK5 activity. During this process, CDK5 phosphorylates p35 and induces its ubiquitination and subsequent degradation. Ubiquitinated by the CRL2(FEM1B) complex, which recognizes the -Gly-Leu-Asp-Arg C-degron at the C-terminus, leading to its degradation. Brain and neuron specific.

The protein localises to the cell membrane. Its subcellular location is the cell projection. It is found in the neuron projection. The protein resides in the nucleus. It localises to the cytoplasm. The protein localises to the perinuclear region. Its subcellular location is the perikaryon. P35 is a neuron specific activator of CDK5. The complex p35/CDK5 is required for neurite outgrowth and cortical lamination. Involved in dendritic spine morphogenesis by mediating the EFNA1-EPHA4 signaling. Activator of TPKII. The complex p35/CDK5 participates in the regulation of the circadian clock by modulating the function of CLOCK protein: phosphorylates CLOCK at 'Thr-451' and 'Thr-461' and regulates the transcriptional activity of the CLOCK-BMAL1 heterodimer in association with altered stability and subcellular distribution. This is Cyclin-dependent kinase 5 activator 1 (Cdk5r1) from Rattus norvegicus (Rat).